A 491-amino-acid chain; its full sequence is UDP-N-acetylmuramate--L-alanine ligase (491 aa).

126–132 (GTHGKTT) contacts ATP.

It belongs to the MurCDEF family.

It localises to the cytoplasm. It catalyses the reaction UDP-N-acetyl-alpha-D-muramate + L-alanine + ATP = UDP-N-acetyl-alpha-D-muramoyl-L-alanine + ADP + phosphate + H(+). The protein operates within cell wall biogenesis; peptidoglycan biosynthesis. In terms of biological role, cell wall formation. The chain is UDP-N-acetylmuramate--L-alanine ligase from Salmonella paratyphi C (strain RKS4594).